A 133-amino-acid chain; its full sequence is Large ribosomal subunit protein bL17 (133 aa).

This sequence belongs to the bacterial ribosomal protein bL17 family. As to quaternary structure, part of the 50S ribosomal subunit. Contacts protein L32.

This Idiomarina loihiensis (strain ATCC BAA-735 / DSM 15497 / L2-TR) protein is Large ribosomal subunit protein bL17.